The chain runs to 304 residues: Acetylxylan esterase A (304 aa).

Positions 1 to 19 are cleaved as a signal peptide; it reads MVKLQYLLSILLYAYSCTA. The active-site Charge relay system is the Ser147. N-linked (GlcNAc...) asparagine glycosylation occurs at Asn189.

It belongs to the carbohydrate esterase 1 (CE1) family. AxeA subfamily. As to quaternary structure, monomer.

The protein resides in the secreted. The enzyme catalyses Deacetylation of xylans and xylo-oligosaccharides.. It participates in glycan degradation; xylan degradation. Acetylxylan esterase involved in the hydrolysis of xylan, a major structural heterogeneous polysaccharide found in plant biomass representing the second most abundant polysaccharide in the biosphere, after cellulose. Degrades acetylated xylans by cleaving acetyl side groups from the hetero-xylan backbone. This is Acetylxylan esterase A (axeA) from Emericella nidulans (strain FGSC A4 / ATCC 38163 / CBS 112.46 / NRRL 194 / M139) (Aspergillus nidulans).